Consider the following 429-residue polypeptide: Serine--tRNA ligase (429 aa).

235-237 (TAE) serves as a coordination point for L-serine. 266–268 (RSE) serves as a coordination point for ATP. Residue glutamate 289 coordinates L-serine. 353 to 356 (EISS) contributes to the ATP binding site. L-serine is bound at residue serine 389.

It belongs to the class-II aminoacyl-tRNA synthetase family. Type-1 seryl-tRNA synthetase subfamily. Homodimer. The tRNA molecule binds across the dimer.

It is found in the cytoplasm. It catalyses the reaction tRNA(Ser) + L-serine + ATP = L-seryl-tRNA(Ser) + AMP + diphosphate + H(+). The enzyme catalyses tRNA(Sec) + L-serine + ATP = L-seryl-tRNA(Sec) + AMP + diphosphate + H(+). Its pathway is aminoacyl-tRNA biosynthesis; selenocysteinyl-tRNA(Sec) biosynthesis; L-seryl-tRNA(Sec) from L-serine and tRNA(Sec): step 1/1. Catalyzes the attachment of serine to tRNA(Ser). Is also able to aminoacylate tRNA(Sec) with serine, to form the misacylated tRNA L-seryl-tRNA(Sec), which will be further converted into selenocysteinyl-tRNA(Sec). The chain is Serine--tRNA ligase from Actinobacillus succinogenes (strain ATCC 55618 / DSM 22257 / CCUG 43843 / 130Z).